The sequence spans 446 residues: Packaging protein 1 (446 aa).

The segment at 1 to 71 (MEEKAGLGRL…QPQASKPKKH (71 aa)) is disordered. Basic and acidic residues predominate over residues 31–43 (FHSDRNHPNKEAE). 170 to 177 (GPTGCGKS) is a binding site for ATP. The interval 439 to 446 (RYYHSKKK) is DNA-binding.

Belongs to the adenoviridae packaging protein 1 family. In terms of assembly, homodimer. Part of a genome packaging complex composed of packaging proteins 1, 2 and 3; this complex specifically binds to the packaging sequence on the left end of viral genomic DNA and performs packaging of the viral genome. Interacts with protein 33K.

The protein resides in the virion. Its subcellular location is the host nucleus. It is found in the host nucleoplasm. The protein localises to the host nucleolus. In terms of biological role, component of the packaging machinery which encapsidates the viral DNA into preformed capsids and transcriptional activator of the viral major late promoter (MLP). Binds, along with packaging proteins 2 and 3, to the specific packaging sequence on the left end of viral genomic DNA and displays ATPase activity thereby providing the power stroke of the packaging machinery. The activity of packaging protein IVa2 is stimulated by protein 33K which acts as a terminase. May be the protein that pumps DNA into the capsid powered by ATP hydrolysis. Specifically binds to the 5'-CG-3' nucleotides of the repeats making up the packaging sequence. Component of the DEF-A and DEF-B transcription factors that bind downstream elements of the major late promoter (MLP), and stimulate transcription from the MLP after initiation of viral DNA replication. DEF-A is a heterodimer packaging proteins 1 and 2 and DEF-B is a homodimer of packaging protein 1. This is Packaging protein 1 from Canine adenovirus serotype 2 (strain Toronto A 26-61) (CAdV-2).